Here is a 169-residue protein sequence, read N- to C-terminus: Calcium-binding protein G (169 aa).

4 consecutive EF-hand domains span residues Lys-9 to Gly-44, Val-60 to Lys-83, Ala-92 to Asn-127, and Asp-133 to Ala-162. Positions 105, 107, 109, 111, 116, 140, 142, 144, 146, and 151 each coordinate Ca(2+).

The sequence is that of Calcium-binding protein G (cbpG) from Dictyostelium discoideum (Social amoeba).